A 668-amino-acid polypeptide reads, in one-letter code: CLK4-associating serine/arginine rich protein (668 aa).

Ser-101 carries the post-translational modification Phosphoserine. Disordered stretches follow at residues 173–232 (AEVE…GMAD) and 252–668 (AKAL…HYRH). Residues 182-214 (PEEEESPAEEESNSDEDEVIPDIDVEVDVDELN) show a composition bias toward acidic residues. A compositionally biased stretch (basic residues) spans 265–283 (RRSRRQRREFREKRLRGRK). Ser-285 and Ser-294 each carry phosphoserine. Basic and acidic residues predominate over residues 290 to 313 (ARRDSPTYDPYKRSPSESSSESRS). Thr-327 is subject to Phosphothreonine. Phosphoserine is present on residues Ser-331 and Ser-335. The span at 340–353 (AAAAAAAAASGAAP) shows a compositional bias: low complexity. Residues 354–365 (GKPPAPPQPGGP) show a composition bias toward pro residues. Residues 378 to 395 (SSSSASRTSSSRSSSRSS) show a composition bias toward low complexity. Over residues 396–435 (SRSRRGYYRSGRHARSRSRSWSRSRSRSRRYSRSRSRGRR) the composition is skewed to basic residues. The segment covering 436-446 (HSDGGSRDGHR) has biased composition (basic and acidic residues). The span at 475–486 (RGARGPRHHSSS) shows a compositional bias: basic residues. Composition is skewed to low complexity over residues 487-510 (HSRS…SRSQ) and 518-527 (QSHSQSQSHS). At Ser-541 the chain carries Phosphoserine. At Thr-567 the chain carries Phosphothreonine. Residues 579–641 (ALNRQFKADK…ERQYSRQSRS (63 aa)) adopt a coiled-coil conformation. Composition is skewed to basic and acidic residues over residues 584–611 (FKAD…ELRA) and 619–635 (KERE…ERQY). Low complexity predominate over residues 636 to 645 (SRQSRSPSPR). Over residues 653 to 668 (SRRRSRSRSRSPHYRH) the composition is skewed to basic residues.

Belongs to the splicing factor SR family. In terms of assembly, probably interacts with CLK4. Phosphorylated in vitro by CLK4.

It localises to the nucleus. Its function is as follows. Probably functions as an alternative splicing regulator. May regulate the mRNA splicing of genes such as CLK1. May act by regulating members of the CLK kinase family. This is CLK4-associating serine/arginine rich protein (Clasrp) from Rattus norvegicus (Rat).